The chain runs to 410 residues: Chorismate synthase (410 aa).

Residues Arg-43 and Arg-49 each contribute to the NADP(+) site. FMN contacts are provided by residues Arg-143–Ser-145, Gln-264–Ala-265, Gly-308, Lys-323–Thr-327, and Arg-349.

Belongs to the chorismate synthase family. In terms of assembly, homotetramer. FMNH2 serves as cofactor.

It carries out the reaction 5-O-(1-carboxyvinyl)-3-phosphoshikimate = chorismate + phosphate. Its pathway is metabolic intermediate biosynthesis; chorismate biosynthesis; chorismate from D-erythrose 4-phosphate and phosphoenolpyruvate: step 7/7. Its function is as follows. Catalyzes the anti-1,4-elimination of the C-3 phosphate and the C-6 proR hydrogen from 5-enolpyruvylshikimate-3-phosphate (EPSP) to yield chorismate, which is the branch point compound that serves as the starting substrate for the three terminal pathways of aromatic amino acid biosynthesis. This reaction introduces a second double bond into the aromatic ring system. The protein is Chorismate synthase of Corynebacterium glutamicum (strain ATCC 13032 / DSM 20300 / JCM 1318 / BCRC 11384 / CCUG 27702 / LMG 3730 / NBRC 12168 / NCIMB 10025 / NRRL B-2784 / 534).